Reading from the N-terminus, the 642-residue chain is 1-deoxy-D-xylulose-5-phosphate synthase (642 aa).

Residues His73 and 114–116 contribute to the thiamine diphosphate site; that span reads SHA. Asp145 contacts Mg(2+). Residues 146-147, Asn175, Phe286, and Glu367 each bind thiamine diphosphate; that span reads GA. Asn175 contributes to the Mg(2+) binding site.

This sequence belongs to the transketolase family. DXPS subfamily. As to quaternary structure, homodimer. Mg(2+) is required as a cofactor. It depends on thiamine diphosphate as a cofactor.

The enzyme catalyses D-glyceraldehyde 3-phosphate + pyruvate + H(+) = 1-deoxy-D-xylulose 5-phosphate + CO2. It participates in metabolic intermediate biosynthesis; 1-deoxy-D-xylulose 5-phosphate biosynthesis; 1-deoxy-D-xylulose 5-phosphate from D-glyceraldehyde 3-phosphate and pyruvate: step 1/1. Functionally, catalyzes the acyloin condensation reaction between C atoms 2 and 3 of pyruvate and glyceraldehyde 3-phosphate to yield 1-deoxy-D-xylulose-5-phosphate (DXP). The chain is 1-deoxy-D-xylulose-5-phosphate synthase from Saccharopolyspora erythraea (strain ATCC 11635 / DSM 40517 / JCM 4748 / NBRC 13426 / NCIMB 8594 / NRRL 2338).